The sequence spans 329 residues: DNA-directed RNA polymerase subunit alpha (329 aa).

An alpha N-terminal domain (alpha-NTD) region spans residues 1–232; it reads MQEMLEQLLT…YQLIAFVDLK (232 aa). Residues 246–329 form an alpha C-terminal domain (alpha-CTD) region; it reads FDPIFLQPVD…PSSLVSKESA (84 aa).

The protein belongs to the RNA polymerase alpha chain family. As to quaternary structure, homodimer. The RNAP catalytic core consists of 2 alpha, 1 beta, 1 beta' and 1 omega subunit. When a sigma factor is associated with the core the holoenzyme is formed, which can initiate transcription.

It catalyses the reaction RNA(n) + a ribonucleoside 5'-triphosphate = RNA(n+1) + diphosphate. In terms of biological role, DNA-dependent RNA polymerase catalyzes the transcription of DNA into RNA using the four ribonucleoside triphosphates as substrates. In Hydrogenovibrio crunogenus (strain DSM 25203 / XCL-2) (Thiomicrospira crunogena), this protein is DNA-directed RNA polymerase subunit alpha.